Here is a 507-residue protein sequence, read N- to C-terminus: 2,3-bisphosphoglycerate-independent phosphoglycerate mutase (507 aa).

Mn(2+)-binding residues include D11 and S61. S61 functions as the Phosphoserine intermediate in the catalytic mechanism. Substrate contacts are provided by residues H122, 150-151, R182, R188, 257-260, and K332; these read RD and RPDR. Residues D397, H401, D438, H439, and H456 each contribute to the Mn(2+) site.

This sequence belongs to the BPG-independent phosphoglycerate mutase family. As to quaternary structure, monomer. Mn(2+) is required as a cofactor.

It catalyses the reaction (2R)-2-phosphoglycerate = (2R)-3-phosphoglycerate. It participates in carbohydrate degradation; glycolysis; pyruvate from D-glyceraldehyde 3-phosphate: step 3/5. Its function is as follows. Catalyzes the interconversion of 2-phosphoglycerate and 3-phosphoglycerate. In Mycoplasma genitalium (strain ATCC 33530 / DSM 19775 / NCTC 10195 / G37) (Mycoplasmoides genitalium), this protein is 2,3-bisphosphoglycerate-independent phosphoglycerate mutase.